The primary structure comprises 300 residues: MTDKDFKSGFAVMAGLPNAGKSTLLNAVAGGLLSAVSPKPQMTRQNIIALSEGEKHQIIFVDTPGFLEAKYKLQEIMKGSLSQALEEDADVAVFVFDPLQEYSAHKKLISKLQNIKCPLFVLINKADTQPVEKLRKIEEQLKKDLPDIEKTFFISAKQNKGVAEFKTAVAETLPFNPPYFPQGQWTDRWERFYVAEFIREQIFNLYEKEVPYCTYVEVETFTEDLGPKNYIKAKIYVERESQKPIIIGSKGSSIAKLRVSAQKRIEEFLGRKYRLELEVSVEPQWRSSKKCLQKFGFITE.

In terms of domain architecture, Era-type G spans 7–175 (KSGFAVMAGL…KTAVAETLPF (169 aa)). The interval 15–22 (GLPNAGKS) is G1. Residue 15–22 (GLPNAGKS) coordinates GTP. A G2 region spans residues 41–45 (QMTRQ). The tract at residues 62–65 (DTPG) is G3. GTP is bound by residues 62–66 (DTPGF) and 124–127 (NKAD). The segment at 124–127 (NKAD) is G4. The segment at 154–156 (ISA) is G5. In terms of domain architecture, KH type-2 spans 198–283 (IREQIFNLYE…RLELEVSVEP (86 aa)).

Belongs to the TRAFAC class TrmE-Era-EngA-EngB-Septin-like GTPase superfamily. Era GTPase family. In terms of assembly, monomer.

It is found in the cytoplasm. It localises to the cell inner membrane. Functionally, an essential GTPase that binds both GDP and GTP, with rapid nucleotide exchange. Plays a role in 16S rRNA processing and 30S ribosomal subunit biogenesis and possibly also in cell cycle regulation and energy metabolism. The sequence is that of GTPase Era from Elusimicrobium minutum (strain Pei191).